The sequence spans 471 residues: Zinc finger protein 385B (471 aa).

Residues 1–93 (MNMANFLRGF…TGSTCHTTTL (93 aa)) form a required for induction of apoptosis region. Residues 34–64 (SFCEVCNIQLNSAAQAQVHSNGKSHRKRVKQ) form a Matrin-type 1 zinc finger. 2 disordered regions span residues 50-92 (QVHS…HTTT) and 175-275 (HYKG…TVVE). Residues 76-92 (ASPSSNSSTGSTCHTTT) are compositionally biased toward low complexity. Positions 94 to 471 (PALVRTPTLM…TPASILFAPY (378 aa)) are interaction with p53/TP53. The Matrin-type 2 zinc finger occupies 157 to 187 (ISCNVCQLRFNSDSQAEAHYKGSKHAKKVKA). Over residues 206–220 (ANPSCSITPITGNNS) the composition is skewed to polar residues. The segment covering 230-250 (KASSSSQPSSSESGSFLLKSG) has biased composition (low complexity). Residues 260–269 (TSPSKSTNGA) show a composition bias toward polar residues. Residues 282–316 (KKLLYCSLCKVAVNSLSQLEAHNTGSKHKTMVEAR) form a Matrin-type 3 zinc finger. Positions 318–340 (GAGPIKSYPRPGSRLKMQNGSKG) are disordered. A Matrin-type 4 zinc finger spans residues 348 to 378 (FHCEICDVHVNSEIQLKQHISSRRHKDRVAG).

In terms of assembly, interacts with p53/TP53; the interaction is direct. In terms of tissue distribution, detected in germinal center of lymph node (at protein level). Expressed in spleen, lymph node and tonsil.

The protein resides in the nucleus. May play a role in p53/TP53-mediated apoptosis. The chain is Zinc finger protein 385B (ZNF385B) from Homo sapiens (Human).